The sequence spans 468 residues: 3-isopropylmalate dehydratase large subunit 2 (468 aa).

Cys-349, Cys-409, and Cys-412 together coordinate [4Fe-4S] cluster.

Belongs to the aconitase/IPM isomerase family. LeuC type 1 subfamily. In terms of assembly, heterodimer of LeuC and LeuD. [4Fe-4S] cluster is required as a cofactor.

It catalyses the reaction (2R,3S)-3-isopropylmalate = (2S)-2-isopropylmalate. Its pathway is amino-acid biosynthesis; L-leucine biosynthesis; L-leucine from 3-methyl-2-oxobutanoate: step 2/4. Its function is as follows. Catalyzes the isomerization between 2-isopropylmalate and 3-isopropylmalate, via the formation of 2-isopropylmaleate. In Bradyrhizobium diazoefficiens (strain JCM 10833 / BCRC 13528 / IAM 13628 / NBRC 14792 / USDA 110), this protein is 3-isopropylmalate dehydratase large subunit 2.